Here is a 457-residue protein sequence, read N- to C-terminus: MYSFNTLRFYLWETIVFFSLAASKEAEAARSAPKPMSPSDFLDKLMGRTSGYDARIRPNFKGPPVNVSCNIFINSFGSIAETTMDYRVNIFLRQQWNDPRLAYNEYPDDSLDLDPSMLDSIWKPDLFFANEKGAHFHEITTDNKLLRISRNGNVLYSIRITLTLACPMDLKNFPMDVQTCIMQLESFGYTMNDLIFEWQEQGAVQVADGLTLPQFILKEEKDLRYCTKHYNTGKFTCIEARFHLERQMGYYLIQMYIPSLLIVILSWISFWINMDAAPARVGLGITTVLTMTTQSSGSRASLPKVSYVKAIDIWMAVCLLFVFSALLEYAAVNFVSRQHKELLRFRRKRRHHKSPMLNLFQDDEGGEGRFNFSAYGMGPACLQAKDGISVKGANNNNTTNPPPAPSKSPEEMRKLFIQRAKKIDKISRIGFPMAFLIFNMFYWIIYKIVRREDVHNK.

An N-terminal signal peptide occupies residues 1–28 (MYSFNTLRFYLWETIVFFSLAASKEAEA). The Extracellular portion of the chain corresponds to 29–250 (ARSAPKPMSP…RFHLERQMGY (222 aa)). N-linked (GlcNAc...) asparagine glycosylation is present at Asn66. Glycine is bound by residues Arg93 and Ser157. A disulfide bridge links Cys166 with Cys180. The Zn(2+) site is built by Glu220 and Asp222. Cys226 and Cys237 are disulfide-bonded. 230–235 (YNTGKF) is a binding site for strychnine. Thr232 is a glycine binding site. His243 provides a ligand contact to Zn(2+). The helical transmembrane segment at 251–272 (YLIQMYIPSLLIVILSWISFWI) threads the bilayer. Residues 273–277 (NMDAA) lie on the Cytoplasmic side of the membrane. Residues 278–298 (PARVGLGITTVLTMTTQSSGS) traverse the membrane as a helical segment. At 299-309 (RASLPKVSYVK) the chain is on the extracellular side. The chain crosses the membrane as a helical span at residues 310 to 330 (AIDIWMAVCLLFVFSALLEYA). Residues 331–425 (AVNFVSRQHK…FIQRAKKIDK (95 aa)) lie on the Cytoplasmic side of the membrane. A disordered region spans residues 391–410 (KGANNNNTTNPPPAPSKSPE). Residues 426-446 (ISRIGFPMAFLIFNMFYWIIY) form a helical membrane-spanning segment. Residues 447–457 (KIVRREDVHNK) are Extracellular-facing.

It belongs to the ligand-gated ion channel (TC 1.A.9) family. Glycine receptor (TC 1.A.9.3) subfamily. GLRA1 sub-subfamily. As to quaternary structure, interacts with GLRB to form heteropentameric channels; this is probably the predominant form in vivo. Heteropentamer composed of four GLRA1 subunits and one GLRB subunit. Heteropentamer composed of two GLRA1 and three GLRB. Heteropentamer composed of three GLRA1 and two GLRB. Homopentamer (in vitro). Both homopentamers and heteropentamers form functional ion channels, but their characteristics are subtly different. As to expression, detected in spinal cord neurons. Detected in brain stem neurons. Detected at lower levels in hippocampus and cerebellum. Detected in the inner plexiform layer of the retina (at protein level).

The protein resides in the postsynaptic cell membrane. Its subcellular location is the synapse. It is found in the perikaryon. It localises to the cell projection. The protein localises to the dendrite. The protein resides in the cell membrane. It catalyses the reaction chloride(in) = chloride(out). Its activity is regulated as follows. Channel opening is triggered by extracellular glycine. Channel characteristics depend on the subunit composition; heteropentameric channels are activated by lower glycine levels and display faster desensitization. Channel opening is also triggered by taurine and beta-alanine. Inhibited by strychnine. Strychnine binding locks the channel in a closed conformation and prevents channel opening in response to extracellular glycine. Inhibited by picrotoxin. Channel activity is enhanced by 5 uM Zn(2+) and inhibited by 100 uM Zn(2+). Functionally, subunit of heteromeric glycine-gated chloride channels. Plays an important role in the down-regulation of neuronal excitability. Contributes to the generation of inhibitory postsynaptic currents. Channel activity is potentiated by ethanol. Potentiation of channel activity by intoxicating levels of ethanol contribute to the sedative effects of ethanol. This Mus musculus (Mouse) protein is Glycine receptor subunit alpha-1 (Glra1).